The chain runs to 147 residues: Cyanate hydratase (147 aa).

Active-site residues include R88, E91, and S114.

This sequence belongs to the cyanase family.

The enzyme catalyses cyanate + hydrogencarbonate + 3 H(+) = NH4(+) + 2 CO2. Its function is as follows. Catalyzes the reaction of cyanate with bicarbonate to produce ammonia and carbon dioxide. The sequence is that of Cyanate hydratase from Prochlorococcus marinus (strain NATL2A).